A 276-amino-acid polypeptide reads, in one-letter code: Probable ABC transporter permease protein PH1036 (276 aa).

6 helical membrane-spanning segments follow: residues 12–32 (IAWS…MASV), 75–95 (IVAI…AYAF), 109–129 (FIVL…YFLL), 137–157 (TFRG…IFFM), 186–206 (IVLP…FTWV), and 241–261 (GLLT…YALF). Residues 70-261 (LKNSLIVAIP…LVPLLVYALF (192 aa)) form the ABC transmembrane type-1 domain.

It belongs to the binding-protein-dependent transport system permease family. MalFG subfamily.

Its subcellular location is the cell membrane. In terms of biological role, probably part of a binding-protein-dependent transport system PH1036/38/39. Probably responsible for the translocation of the substrate across the membrane. The chain is Probable ABC transporter permease protein PH1036 from Pyrococcus horikoshii (strain ATCC 700860 / DSM 12428 / JCM 9974 / NBRC 100139 / OT-3).